Reading from the N-terminus, the 415-residue chain is Plasminogen activator inhibitor 2 (415 aa).

A disulfide bridge links Cys5 with Cys405. N-linked (GlcNAc...) asparagine glycosylation is found at Asn75, Asn115, and Asn339.

This sequence belongs to the serpin family. Ov-serpin subfamily. Interacts with PSMB1. The signal sequence is not cleaved.

It localises to the cytoplasm. Its subcellular location is the secreted. It is found in the extracellular space. Its function is as follows. Inhibits urokinase-type plasminogen activator. The monocyte derived PAI-2 is distinct from the endothelial cell-derived PAI-1. The polypeptide is Plasminogen activator inhibitor 2 (SERPINB2) (Homo sapiens (Human)).